The chain runs to 152 residues: Histone H2B.1 (152 aa).

A compositionally biased stretch (basic and acidic residues) spans 1-23 (MAPKAEKKPAEKKPAAGEEKSAE). The disordered stretch occupies residues 1–60 (MAPKAEKKPAEKKPAAGEEKSAEKAPAGKKPKAEKRLPASKASSKEGGAGDKKGRKKAKK). Residues Lys-7 and Lys-35 each carry the N6-acetyllysine modification. Lys-148 participates in a covalent cross-link: Glycyl lysine isopeptide (Lys-Gly) (interchain with G-Cter in ubiquitin).

It belongs to the histone H2B family. In terms of assembly, the nucleosome is a histone octamer containing two molecules each of H2A, H2B, H3 and H4 assembled in one H3-H4 heterotetramer and two H2A-H2B heterodimers. The octamer wraps approximately 147 bp of DNA. Post-translationally, can be acetylated to form H2BK6ac and H2BK33ac. In terms of processing, monoubiquitinated by BRE1 to form H2BK143ub1 and deubiquitinated by UBP26. Required for heterochromatic histone H3 di- and trimethylation at H3K4me. May give a specific tag for epigenetic transcriptional activation.

The protein localises to the nucleus. The protein resides in the chromosome. In terms of biological role, core component of nucleosome. Nucleosomes wrap and compact DNA into chromatin, limiting DNA accessibility to the cellular machineries which require DNA as a template. Histones thereby play a central role in transcription regulation, DNA repair, DNA replication and chromosomal stability. DNA accessibility is regulated via a complex set of post-translational modifications of histones, also called histone code, and nucleosome remodeling. The chain is Histone H2B.1 from Oryza sativa subsp. indica (Rice).